The sequence spans 171 residues: Large ribosomal subunit protein uL5 (171 aa).

Belongs to the universal ribosomal protein uL5 family. As to quaternary structure, part of the 50S ribosomal subunit; contacts the 5S rRNA and probably tRNA. Forms a bridge to the 30S subunit in the 70S ribosome.

Functionally, this is one of the proteins that bind and probably mediate the attachment of the 5S RNA into the large ribosomal subunit, where it forms part of the central protuberance. In the 70S ribosome it contacts protein S13 of the 30S subunit (bridge B1b), connecting the 2 subunits; this bridge is implicated in subunit movement. May contact the P site tRNA; the 5S rRNA and some of its associated proteins might help stabilize positioning of ribosome-bound tRNAs. The polypeptide is Large ribosomal subunit protein uL5 (Methanocorpusculum labreanum (strain ATCC 43576 / DSM 4855 / Z)).